The following is a 213-amino-acid chain: Adenylate kinase (213 aa).

10–15 serves as a coordination point for ATP; it reads GSGKGT. The NMP stretch occupies residues 30 to 59; the sequence is SVGDLLRNIISSSSELGKKIKGTVESGNLI. Residues arginine 36, 57-59, 83-86, and glutamine 90 contribute to the AMP site; these read NLI and GFPR. An LID region spans residues 125-160; sequence NRLACLDCKNIYSVSSFKSTTCAKCKSTRLEKRIDD. Arginine 126 is an ATP binding site. Positions 129 and 132 each coordinate Zn(2+). ATP is bound at residue 135–136; the sequence is IY. The Zn(2+) site is built by cysteine 146 and cysteine 149. Residues arginine 157 and arginine 169 each contribute to the AMP site. Residue leucine 195 coordinates ATP.

The protein belongs to the adenylate kinase family. Monomer.

It localises to the cytoplasm. The enzyme catalyses AMP + ATP = 2 ADP. It functions in the pathway purine metabolism; AMP biosynthesis via salvage pathway; AMP from ADP: step 1/1. Functionally, catalyzes the reversible transfer of the terminal phosphate group between ATP and AMP. Plays an important role in cellular energy homeostasis and in adenine nucleotide metabolism. This chain is Adenylate kinase, found in Wolbachia pipientis wMel.